The chain runs to 252 residues: 3-dehydroquinate dehydratase (252 aa).

Residues serine 21, 46–48 (EWR), and arginine 82 each bind 3-dehydroquinate. Histidine 143 functions as the Proton donor/acceptor in the catalytic mechanism. The active-site Schiff-base intermediate with substrate is the lysine 170. Residues arginine 213, serine 232, and glutamine 236 each contribute to the 3-dehydroquinate site.

Belongs to the type-I 3-dehydroquinase family. In terms of assembly, homodimer.

The catalysed reaction is 3-dehydroquinate = 3-dehydroshikimate + H2O. It functions in the pathway metabolic intermediate biosynthesis; chorismate biosynthesis; chorismate from D-erythrose 4-phosphate and phosphoenolpyruvate: step 3/7. In terms of biological role, involved in the third step of the chorismate pathway, which leads to the biosynthesis of aromatic amino acids. Catalyzes the cis-dehydration of 3-dehydroquinate (DHQ) and introduces the first double bond of the aromatic ring to yield 3-dehydroshikimate. In Shigella dysenteriae serotype 1 (strain Sd197), this protein is 3-dehydroquinate dehydratase.